A 110-amino-acid chain; its full sequence is UPF0213 protein DP2720 (110 aa).

In terms of domain architecture, GIY-YIG spans 12–88 (PAWFVYIVQC…KQLSPTRKRT (77 aa)).

It belongs to the UPF0213 family.

This chain is UPF0213 protein DP2720, found in Desulfotalea psychrophila (strain LSv54 / DSM 12343).